A 298-amino-acid chain; its full sequence is Tyrosine recombinase XerC (298 aa).

The Core-binding (CB) domain maps to 2–88 (TDLHTDVERY…ALRSFFDWLV (87 aa)). In terms of domain architecture, Tyr recombinase spans 109–288 (HLPKNIDVDD…DFQHLASVYD (180 aa)). Active-site residues include R148, K172, H240, R243, and H266. Y275 serves as the catalytic O-(3'-phospho-DNA)-tyrosine intermediate.

This sequence belongs to the 'phage' integrase family. XerC subfamily. Forms a cyclic heterotetrameric complex composed of two molecules of XerC and two molecules of XerD, in which XerC interacts with XerD via its C-terminal region, XerD interacts with XerC via its C-terminal region and so on.

It is found in the cytoplasm. Its activity is regulated as follows. FtsK may regulate the catalytic switch between XerC and XerD in the heterotetrameric complex during the two steps of the recombination process. In terms of biological role, site-specific tyrosine recombinase, which acts by catalyzing the cutting and rejoining of the recombining DNA molecules. Binds cooperatively to specific DNA consensus sequences that are separated from XerD binding sites by a short central region, forming the heterotetrameric XerC-XerD complex that recombines DNA substrates. The complex is essential to convert dimers of the bacterial chromosome into monomers to permit their segregation at cell division. It also contributes to the segregational stability of plasmids. In the complex XerC specifically exchanges the top DNA strands. In Shigella dysenteriae serotype 1 (strain Sd197), this protein is Tyrosine recombinase XerC.